Reading from the N-terminus, the 409-residue chain is S-adenosylmethionine synthase (409 aa).

Position 15 (H15) interacts with ATP. D17 contacts Mg(2+). E43 lines the K(+) pocket. E56 and Q100 together coordinate L-methionine. The interval 100-110 (QSSDIAQGVNE) is flexible loop. Residues 171–173 (DGK), 248–249 (KF), D257, 263–264 (RK), A280, and K284 each bind ATP. D257 lines the L-methionine pocket. K288 lines the L-methionine pocket.

Belongs to the AdoMet synthase family. Homotetramer; dimer of dimers. It depends on Mg(2+) as a cofactor. K(+) is required as a cofactor.

Its subcellular location is the cytoplasm. The enzyme catalyses L-methionine + ATP + H2O = S-adenosyl-L-methionine + phosphate + diphosphate. It participates in amino-acid biosynthesis; S-adenosyl-L-methionine biosynthesis; S-adenosyl-L-methionine from L-methionine: step 1/1. Functionally, catalyzes the formation of S-adenosylmethionine (AdoMet) from methionine and ATP. The overall synthetic reaction is composed of two sequential steps, AdoMet formation and the subsequent tripolyphosphate hydrolysis which occurs prior to release of AdoMet from the enzyme. The polypeptide is S-adenosylmethionine synthase (Prochlorococcus marinus (strain NATL2A)).